Reading from the N-terminus, the 783-residue chain is BMP/retinoic acid-inducible neural-specific protein 2 (783 aa).

An N-terminal signal peptide occupies residues 1 to 33; that stretch reads MRWQCGTRFRGLRPAVAPWTALLALGLPGWVLA. An MACPF domain is found at 85–281; that stretch reads RYRIYREFAR…FVAAALSYIT (197 aa). 6 N-linked (GlcNAc...) asparagine glycosylation sites follow: Asn185, Asn354, Asn473, Asn579, Asn626, and Asn658.

Belongs to the BRINP family.

It is found in the secreted. Functionally, inhibits neuronal cell proliferation by negative regulation of the cell cycle transition. The protein is BMP/retinoic acid-inducible neural-specific protein 2 (BRINP2) of Homo sapiens (Human).